The chain runs to 111 residues: DNA-binding protein AF_2068 (111 aa).

This sequence belongs to the PDCD5 family.

The chain is DNA-binding protein AF_2068 from Archaeoglobus fulgidus (strain ATCC 49558 / DSM 4304 / JCM 9628 / NBRC 100126 / VC-16).